Reading from the N-terminus, the 188-residue chain is dCTP deaminase (188 aa).

Residues 111–116 (KSTYAR), 135–137 (TLE), Gln-156, Tyr-170, and Gln-180 contribute to the dCTP site. Glu-137 acts as the Proton donor/acceptor in catalysis.

Belongs to the dCTP deaminase family. As to quaternary structure, homotrimer.

The catalysed reaction is dCTP + H2O + H(+) = dUTP + NH4(+). It functions in the pathway pyrimidine metabolism; dUMP biosynthesis; dUMP from dCTP (dUTP route): step 1/2. Functionally, catalyzes the deamination of dCTP to dUTP. This Acidithiobacillus ferrooxidans (strain ATCC 23270 / DSM 14882 / CIP 104768 / NCIMB 8455) (Ferrobacillus ferrooxidans (strain ATCC 23270)) protein is dCTP deaminase.